We begin with the raw amino-acid sequence, 101 residues long: Small ribosomal subunit protein uS14 (101 aa).

This sequence belongs to the universal ribosomal protein uS14 family. Part of the 30S ribosomal subunit. Contacts proteins S3 and S10.

Its function is as follows. Binds 16S rRNA, required for the assembly of 30S particles and may also be responsible for determining the conformation of the 16S rRNA at the A site. The chain is Small ribosomal subunit protein uS14 from Caulobacter sp. (strain K31).